The following is a 406-amino-acid chain: MTAASLVTLALSLSLAQAAGHAGEHGAPAPEVATPAEGHGARDAAGAATDPHGAAAEHGAAAHEDPAQHGAAGAEAGHDESLGAVMMHHVADGYVLELPGFCGGLSWACHVDLRDVFGTEHVSEIDAHGHAVERNVSGPLVFGKVDMTPTKHVVMMWIASAILLLVVFAAVRKKSLVPRGLYNFIEMLVQFVRNEIAVKNIGEKDADRFVPYLVSAFFFILFLNLFGLVPFAATATANISVTVMMAVFTFLITQYAQIRAVGVGGYFAHMTGGVPKSLWPLWFIMIPVEFLGLFTKPFALTVRLFANMVAGHFVILALLGLIFALNSQWIAIASVPMALSIYMLELFVAFVQAYIFTMLSSLFIGSVVAHHGHEDEHEEHGHGAAATGGAHGSHGSHVAGASPGHG.

2 stretches are compositionally biased toward low complexity: residues A22–E31 and D43–G59. Positions A22–A76 are disordered. 6 helical membrane passes run K151 to V171, F209 to V229, A232 to I252, L278 to F298, L304 to A324, and V351 to H371. The tract at residues D375 to G406 is disordered. The span at G383–G406 shows a compositional bias: low complexity.

This sequence belongs to the ATPase A chain family. F-type ATPases have 2 components, CF(1) - the catalytic core - and CF(0) - the membrane proton channel. CF(1) has five subunits: alpha(3), beta(3), gamma(1), delta(1), epsilon(1). CF(0) has three main subunits: a(1), b(2) and c(9-12). The alpha and beta chains form an alternating ring which encloses part of the gamma chain. CF(1) is attached to CF(0) by a central stalk formed by the gamma and epsilon chains, while a peripheral stalk is formed by the delta and b chains.

Its subcellular location is the cell inner membrane. Its function is as follows. Key component of the proton channel; it plays a direct role in the translocation of protons across the membrane. This Anaeromyxobacter sp. (strain Fw109-5) protein is ATP synthase subunit a.